The primary structure comprises 493 residues: Alpha-amylase-related protein (493 aa).

The signal sequence occupies residues 1 to 19 (MFKLAFTLTLCLAGSLSLA). Glutamine 20 bears the Pyrrolidone carboxylic acid mark. Cysteine 47 and cysteine 103 are disulfide-bonded. Asparagine 117, glutamine 168, and aspartate 177 together coordinate Ca(2+). The cysteines at positions 156 and 170 are disulfide-linked. Residue arginine 205 participates in chloride binding. Aspartate 207 serves as the catalytic Nucleophile. Histidine 211 is a binding site for Ca(2+). The Proton donor role is filled by glutamate 244. Chloride contacts are provided by asparagine 307 and arginine 342. Intrachain disulfides connect cysteine 375-cysteine 381, cysteine 417-cysteine 440, and cysteine 447-cysteine 459.

It belongs to the glycosyl hydrolase 13 family. As to quaternary structure, monomer. The cofactor is Ca(2+). Requires chloride as cofactor.

Its subcellular location is the secreted. It catalyses the reaction Endohydrolysis of (1-&gt;4)-alpha-D-glucosidic linkages in polysaccharides containing three or more (1-&gt;4)-alpha-linked D-glucose units.. In Drosophila orena (Fruit fly), this protein is Alpha-amylase-related protein (Amyrel).